The sequence spans 547 residues: Mercuric reductase (547 aa).

Positions 4–67 (NSYKIPIQGM…NISAAGYQPG (64 aa)) constitute an HMA domain. 2 residues coordinate a metal cation: Cys-15 and Cys-18. Ala-97, Gly-117, and Thr-122 together coordinate FAD. Cys-123 and Cys-128 are oxidised to a cystine. FAD contacts are provided by Lys-132, Ala-196, Asp-388, and Val-396. Cys-544 and Cys-545 together coordinate Hg(2+).

This sequence belongs to the class-I pyridine nucleotide-disulfide oxidoreductase family. In terms of assembly, homodimer. FAD serves as cofactor.

The catalysed reaction is Hg + NADP(+) + H(+) = Hg(2+) + NADPH. Its function is as follows. Resistance to Hg(2+) in bacteria appears to be governed by a specialized system which includes mercuric reductase. MerA protein is responsible for volatilizing mercury as Hg(0). In Staphylococcus aureus, this protein is Mercuric reductase (merA).